Here is a 279-residue protein sequence, read N- to C-terminus: MEFEDNNNNNDEEQEEDMNLHEEEEDDDAVYDSPPLSRVLPKASTESHETTGTTSTGGGGGFMVVHGGGGSRFRFRECLKNQAVNIGGHAVDGCGEFMPAGIEGTIDALKCAACGCHRNFHRKELPYFHHAPPQHQPPPPPPGFYRLPAPVSYRPPPSQAPPLQLALPPPQRERSEDPMETSSAEAGGGIRKRHRTKFTAEQKERMLALAERIGWRIQRQDDEVIQRFCQETGVPRQVLKVWLHNNKHTLGKSPSPLHHHQAPPPPPPQSSFHHEQDQP.

A compositionally biased stretch (acidic residues) spans 1 to 30 (MEFEDNNNNNDEEQEEDMNLHEEEEDDDAV). The tract at residues 1-62 (MEFEDNNNNN…TTSTGGGGGF (62 aa)) is disordered. The segment at 75-124 (FRECLKNQAVNIGGHAVDGCGEFMPAGIEGTIDALKCAACGCHRNFHRKE) adopts a ZF-HD dimerization-type zinc-finger fold. Disordered stretches follow at residues 128-199 (FHHA…TKFT) and 245-279 (NNKHTLGKSPSPLHHHQAPPPPPPQSSFHHEQDQP). Over residues 134–143 (QHQPPPPPPG) the composition is skewed to pro residues. Residues 191–254 (RKRHRTKFTA…NNKHTLGKSP (64 aa)) constitute a DNA-binding region (homeobox; atypical).

Homo- and heterodimer with other ZFHD proteins. Interacts with MIF1 and MIF2; these interactions prevent nuclear localization and DNA-binding to inhibit transcription regulation activity. Binds to ZHD2, ZHD3, ZHD4, ZHD5, ZHD6, ZHD7, ZHD8, ZHD9, ZHD10 and ZHD11. In terms of tissue distribution, mostly expressed in flowers and inflorescence.

The protein resides in the nucleus. In terms of biological role, putative transcription factor. This is Zinc-finger homeodomain protein 1 (ZHD1) from Arabidopsis thaliana (Mouse-ear cress).